The sequence spans 1512 residues: Mitogen-activated protein kinase kinase kinase 1 (1512 aa).

Over residues 1–13 the composition is skewed to low complexity; it reads MAAAAGNRASSSG. Disordered regions lie at residues 1 to 37, 67 to 181, and 213 to 304; these read MAAAAGNRASSSGFPGARATSPEAGGGGGALKASSAP, SVEL…DRPE, and VKPI…PEET. N-acetylalanine is present on Ala-2. A phosphoserine mark is found at Ser-21 and Ser-35. Composition is skewed to low complexity over residues 81 to 99, 129 to 142, and 150 to 160; these read AASPPASSTSPSPEPADAA, AAPDSGASSPAAAE, and AAEPSPAAAPA. Phosphoserine is present on residues Ser-137 and Ser-154. A compositionally biased stretch (basic and acidic residues) spans 162 to 181; the sequence is REMENKETLKGLHKMDDRPE. Residues 250–260 are compositionally biased toward low complexity; the sequence is SPSPGNSPSGR. Residue Ser-275 is modified to Phosphoserine. Phosphothreonine is present on Thr-285. Residues Ser-292, Ser-297, and Ser-300 each carry the phosphoserine modification. The segment at 338–366 adopts an SWIM-type zinc-finger fold; that stretch reads YRVFIGPQNCSCARGTFCIHLLFVMLRVF. The segment covering 416–433 has biased composition (low complexity); the sequence is SNSHTLSSSSTSTSSSEN. Residues 416-436 are disordered; it reads SNSHTLSSSSTSTSSSENSIK. The RING-type zinc finger occupies 443–492; sequence CPICLLGMLDEESLTVCEDGCRNKLHHHCMSIWAEECRRNREPLICPLCR. Phosphoserine is present on residues Ser-507 and Ser-531. Disordered regions lie at residues 511–532 and 602–624; these read SPSSLRAAQQQTVQQQPLAGSR and STGNSGGSSGSSPSGGATSGSSQ. Over residues 611 to 624 the composition is skewed to low complexity; it reads GSSPSGGATSGSSQ. A Phosphoserine modification is found at Ser-923. The disordered stretch occupies residues 933–972; sequence SISVGPSSSTTTTTTTTEQPKPMVQTKGRPHSQCLNSSPL. The span at 939 to 949 shows a compositional bias: low complexity; sequence SSSTTTTTTTT. A Phosphoserine modification is found at Ser-1018. Residues 1032-1041 are compositionally biased toward basic and acidic residues; sequence NCPENKDSDK. The disordered stretch occupies residues 1032 to 1087; that stretch reads NCPENKDSDKLSPVFTQSRPLPSSNIHRPKPSRPTPGNTSKQGDPSKNSMTLDLNS. Ser-1043 carries the phosphoserine modification. 2 stretches are compositionally biased toward polar residues: residues 1045–1057 and 1066–1087; these read VFTQSRPLPSSNI and TPGNTSKQGDPSKNSMTLDLNS. In terms of domain architecture, Protein kinase spans 1243 to 1508; sequence WLKGQQIGLG…SRELLKHPVF (266 aa). ATP is bound by residues 1249 to 1257 and Lys-1272; that span reads IGLGAFSSC. Asp-1369 serves as the catalytic Proton acceptor. Phosphothreonine; by autocatalysis is present on residues Thr-1400 and Thr-1412.

Belongs to the protein kinase superfamily. STE Ser/Thr protein kinase family. MAP kinase kinase kinase subfamily. As to quaternary structure, binds both upstream activators and downstream substrates in multimolecular complexes through its N-terminus. Oligomerizes after binding MAP2K4 or TRAF2. Interacts with AXIN1. Interacts (via the kinase catalytic domain) with STK38. Interacts with GRIPAP1. Requires Mg(2+) as cofactor. In terms of processing, autophosphorylated.

It carries out the reaction L-seryl-[protein] + ATP = O-phospho-L-seryl-[protein] + ADP + H(+). The enzyme catalyses L-threonyl-[protein] + ATP = O-phospho-L-threonyl-[protein] + ADP + H(+). It catalyses the reaction S-ubiquitinyl-[E2 ubiquitin-conjugating enzyme]-L-cysteine + [acceptor protein]-L-lysine = [E2 ubiquitin-conjugating enzyme]-L-cysteine + N(6)-ubiquitinyl-[acceptor protein]-L-lysine.. Its activity is regulated as follows. Activated by autophosphorylation on Thr-1400 and Thr-1412 following oligomerization. Functionally, component of a protein kinase signal transduction cascade. Activates the ERK and JNK kinase pathways by phosphorylation of MAP2K1 and MAP2K4. May phosphorylate the MAPK8/JNK1 kinase. Activates CHUK and IKBKB, the central protein kinases of the NF-kappa-B pathway. The polypeptide is Mitogen-activated protein kinase kinase kinase 1 (MAP3K1) (Homo sapiens (Human)).